Here is a 257-residue protein sequence, read N- to C-terminus: MADDTINAINVDPSEVEKFNKLAGEWWNKTGAFATLHEINPLRLNWIEENVKRGYVSADSQKTAEMGLAGKKVLDVGCGGGILSESMARRGADVTGIDLGTENLKAASLHAEQSNLQDTLRYQHIPVEALAATHAGQFDVVTCMEMLEHVPDPAAIVDACFKLLAPGGVCVLSTINRNPKSYLFAIVGAEYVLRLLDRGTHDYAKFITPAELDKMAIDAEFARQDIIGLHYNPLTKRYWLAQNVDVNYMIAVQKPLA.

S-adenosyl-L-methionine contacts are provided by arginine 43, glycine 77, aspartate 98, and methionine 144.

Belongs to the methyltransferase superfamily. UbiG/COQ3 family.

It carries out the reaction a 3-demethylubiquinol + S-adenosyl-L-methionine = a ubiquinol + S-adenosyl-L-homocysteine + H(+). The enzyme catalyses a 3-(all-trans-polyprenyl)benzene-1,2-diol + S-adenosyl-L-methionine = a 2-methoxy-6-(all-trans-polyprenyl)phenol + S-adenosyl-L-homocysteine + H(+). It participates in cofactor biosynthesis; ubiquinone biosynthesis. O-methyltransferase that catalyzes the 2 O-methylation steps in the ubiquinone biosynthetic pathway. The polypeptide is Ubiquinone biosynthesis O-methyltransferase (Psychrobacter cryohalolentis (strain ATCC BAA-1226 / DSM 17306 / VKM B-2378 / K5)).